The primary structure comprises 124 residues: Cytochrome b5-like protein (124 aa).

Residues 5 to 22 traverse the membrane as a helical segment; it reads YLLILIIIYVIKIICRYF. One can recognise a Cytochrome b5 heme-binding domain in the interval 49 to 124; the sequence is NQINQVNQVN…ILSKYKITEK (76 aa). Positions 84 and 108 each coordinate heme.

It belongs to the cytochrome b5 family.

Its subcellular location is the membrane. Its function is as follows. Membrane bound hemoprotein which function as an electron carrier for several membrane bound oxygenases. The chain is Cytochrome b5-like protein from Acanthamoeba polyphaga (Amoeba).